A 312-amino-acid polypeptide reads, in one-letter code: Methionyl-tRNA formyltransferase (312 aa).

109-112 provides a ligand contact to (6S)-5,6,7,8-tetrahydrofolate; it reads SLLP.

It belongs to the Fmt family.

It catalyses the reaction L-methionyl-tRNA(fMet) + (6R)-10-formyltetrahydrofolate = N-formyl-L-methionyl-tRNA(fMet) + (6S)-5,6,7,8-tetrahydrofolate + H(+). Its function is as follows. Attaches a formyl group to the free amino group of methionyl-tRNA(fMet). The formyl group appears to play a dual role in the initiator identity of N-formylmethionyl-tRNA by promoting its recognition by IF2 and preventing the misappropriation of this tRNA by the elongation apparatus. This Caulobacter sp. (strain K31) protein is Methionyl-tRNA formyltransferase.